A 402-amino-acid polypeptide reads, in one-letter code: Type II NADH:quinone oxidoreductase (402 aa).

Residues 12–16 (GAGYA), 39–40 (NK), and valine 83 each bind FAD. Glutamate 172 is a catalytic residue. FAD contacts are provided by residues aspartate 302, 319-320 (AQ), and lysine 379.

It belongs to the NADH dehydrogenase family. FAD is required as a cofactor.

Its subcellular location is the cell membrane. The catalysed reaction is a quinone + NADH + H(+) = a quinol + NAD(+). Functionally, alternative, nonproton pumping NADH:quinone oxidoreductase that delivers electrons to the respiratory chain by oxidation of NADH and reduction of quinones, and contributes to the regeneration of NAD(+). In Staphylococcus epidermidis (strain ATCC 35984 / DSM 28319 / BCRC 17069 / CCUG 31568 / BM 3577 / RP62A), this protein is Type II NADH:quinone oxidoreductase.